Here is a 331-residue protein sequence, read N- to C-terminus: Pectinesterase (331 aa).

Positions 1–17 (MVKSILASVLFAATALA) are cleaved as a signal peptide. Gln-138 serves as a coordination point for substrate. Asp-161 (proton donor) is an active-site residue. Asp-182 (nucleophile) is an active-site residue. Positions 247 and 249 each coordinate substrate.

It belongs to the pectinesterase family.

It localises to the secreted. It carries out the reaction [(1-&gt;4)-alpha-D-galacturonosyl methyl ester](n) + n H2O = [(1-&gt;4)-alpha-D-galacturonosyl](n) + n methanol + n H(+). It functions in the pathway glycan metabolism; pectin degradation; 2-dehydro-3-deoxy-D-gluconate from pectin: step 1/5. Its function is as follows. Involved in maceration and soft-rotting of plant tissue. In Aspergillus niger, this protein is Pectinesterase (pme1).